A 293-amino-acid chain; its full sequence is Protease HtpX (293 aa).

A run of 2 helical transmembrane segments spans residues 4–24 and 34–54; these read IALF…VLSL and GLMI…LLMS. H139 is a binding site for Zn(2+). E140 is a catalytic residue. H143 is a binding site for Zn(2+). 2 consecutive transmembrane segments (helical) span residues 158 to 178 and 193 to 213; these read VVNT…AGFM and LIYF…ASII. Position 222 (E222) interacts with Zn(2+).

The protein belongs to the peptidase M48B family. Zn(2+) serves as cofactor.

It is found in the cell inner membrane. The polypeptide is Protease HtpX (Escherichia fergusonii (strain ATCC 35469 / DSM 13698 / CCUG 18766 / IAM 14443 / JCM 21226 / LMG 7866 / NBRC 102419 / NCTC 12128 / CDC 0568-73)).